The primary structure comprises 316 residues: 4-diphosphocytidyl-2-C-methyl-D-erythritol kinase (316 aa).

The active site involves lysine 32. 126-136 serves as a coordination point for ATP; it reads PVGAGLGGGSA. Residue aspartate 168 is part of the active site.

Belongs to the GHMP kinase family. IspE subfamily.

It catalyses the reaction 4-CDP-2-C-methyl-D-erythritol + ATP = 4-CDP-2-C-methyl-D-erythritol 2-phosphate + ADP + H(+). It participates in isoprenoid biosynthesis; isopentenyl diphosphate biosynthesis via DXP pathway; isopentenyl diphosphate from 1-deoxy-D-xylulose 5-phosphate: step 3/6. Its function is as follows. Catalyzes the phosphorylation of the position 2 hydroxy group of 4-diphosphocytidyl-2C-methyl-D-erythritol. The polypeptide is 4-diphosphocytidyl-2-C-methyl-D-erythritol kinase (Bifidobacterium longum (strain DJO10A)).